The chain runs to 318 residues: Dehydration-responsive element-binding protein 2E (318 aa).

Over residues 1 to 15 the composition is skewed to basic residues; the sequence is MESYGRKRAWKKGPT. Residues 1 to 24 form a disordered region; the sequence is MESYGRKRAWKKGPTRGKGGPQNA. Positions 27–84 form a DNA-binding region, AP2/ERF; it reads EYRGVRQRTWGKWVAEIREPNKRTRLWLGSFATAEEAALAYDEAARRLYGPDAFLNLP. Residues 140-178 form a disordered region; that stretch reads ELKNSSSSPTKPPPRTPTRANPPPPPLPTSSPCSTVTNS. A compositionally biased stretch (pro residues) spans 149 to 168; it reads TKPPPRTPTRANPPPPPLPT.

The protein belongs to the AP2/ERF transcription factor family. ERF subfamily.

Its subcellular location is the nucleus. In terms of biological role, probable transcriptional activator that binds to the DNA sequence 5'-[AG]CCGAC-3' of the cis-acting dehydration-responsive element (DRE). The protein is Dehydration-responsive element-binding protein 2E (DREB2E) of Oryza sativa subsp. japonica (Rice).